The primary structure comprises 400 residues: Protection of telomeres homolog 1 (400 aa).

The protein belongs to the telombin family. Expressed in sperm and oocytes.

The protein localises to the nucleus. It localises to the nucleus envelope. Its subcellular location is the chromosome. It is found in the telomere. Its function is as follows. Telomeric DNA-binding protein, which binds to single-stranded C-rich repeat sequences, with high specificity to the 5'-GCCTAA-3' sequence. Repeat sequence binding can be at the 5' or 3' telomeric end. May have a role in protecting the 5' end of the C-rich strand of the telomere. Acts redundantly with pot-2 to negatively regulate telomerase-mediated telomere extension. Also regulates telomere length by the telomerase-independent telomere maintenance pathway called ALT (alternative lengthening of telomeres). Through sun-1, anchors telomeres to the nuclear envelope in embryos. The sequence is that of Protection of telomeres homolog 1 from Caenorhabditis elegans.